The sequence spans 351 residues: Nicotinate-nucleotide--dimethylbenzimidazole phosphoribosyltransferase (351 aa).

Catalysis depends on glutamate 319, which acts as the Proton acceptor.

Belongs to the CobT family.

The enzyme catalyses 5,6-dimethylbenzimidazole + nicotinate beta-D-ribonucleotide = alpha-ribazole 5'-phosphate + nicotinate + H(+). Its pathway is nucleoside biosynthesis; alpha-ribazole biosynthesis; alpha-ribazole from 5,6-dimethylbenzimidazole: step 1/2. In terms of biological role, catalyzes the synthesis of alpha-ribazole-5'-phosphate from nicotinate mononucleotide (NAMN) and 5,6-dimethylbenzimidazole (DMB). In Desulforamulus reducens (strain ATCC BAA-1160 / DSM 100696 / MI-1) (Desulfotomaculum reducens), this protein is Nicotinate-nucleotide--dimethylbenzimidazole phosphoribosyltransferase.